The chain runs to 209 residues: Chromophore lyase CpcT/CpeT 1 (209 aa).

Belongs to the CpcT/CpeT biliprotein lyase family.

Functionally, covalently attaches a chromophore to Cys residue(s) of phycobiliproteins. In Trichodesmium erythraeum (strain IMS101), this protein is Chromophore lyase CpcT/CpeT 1.